Consider the following 749-residue polypeptide: 5-methyltetrahydropteroyltriglutamate--homocysteine methyltransferase (749 aa).

5-methyltetrahydropteroyltri-L-glutamate is bound by residues 15-18 (RELK) and Lys-114. Residues 425–427 (IGS) and Glu-478 contribute to the L-homocysteine site. Residues 425-427 (IGS) and Glu-478 contribute to the L-methionine site. Trp-555 is a binding site for 5-methyltetrahydropteroyltri-L-glutamate. Asp-593 serves as a coordination point for L-homocysteine. Asp-593 contacts L-methionine. Glu-599 is a binding site for 5-methyltetrahydropteroyltri-L-glutamate. Zn(2+) contacts are provided by His-636, Cys-638, and Glu-660. The Proton donor role is filled by His-689. Residue Cys-721 participates in Zn(2+) binding.

Belongs to the vitamin-B12 independent methionine synthase family. Zn(2+) serves as cofactor.

It carries out the reaction 5-methyltetrahydropteroyltri-L-glutamate + L-homocysteine = tetrahydropteroyltri-L-glutamate + L-methionine. It participates in amino-acid biosynthesis; L-methionine biosynthesis via de novo pathway; L-methionine from L-homocysteine (MetE route): step 1/1. In terms of biological role, catalyzes the transfer of a methyl group from 5-methyltetrahydrofolate to homocysteine resulting in methionine formation. This Streptococcus suis (strain 05ZYH33) protein is 5-methyltetrahydropteroyltriglutamate--homocysteine methyltransferase.